Reading from the N-terminus, the 235-residue chain is Lipoprotein-releasing system ATP-binding protein LolD (235 aa).

The ABC transporter domain occupies 7–234 (LQCTNLSKRY…QQELTLMGAR (228 aa)). 43 to 50 (GSSGSGKS) lines the ATP pocket.

It belongs to the ABC transporter superfamily. Lipoprotein translocase (TC 3.A.1.125) family. The complex is composed of two ATP-binding proteins (LolD) and two transmembrane proteins (LolC and LolE).

It localises to the cell inner membrane. Functionally, part of the ABC transporter complex LolCDE involved in the translocation of mature outer membrane-directed lipoproteins, from the inner membrane to the periplasmic chaperone, LolA. Responsible for the formation of the LolA-lipoprotein complex in an ATP-dependent manner. The protein is Lipoprotein-releasing system ATP-binding protein LolD of Pectobacterium atrosepticum (strain SCRI 1043 / ATCC BAA-672) (Erwinia carotovora subsp. atroseptica).